The sequence spans 776 residues: MTAETRIHELRAELDQHNYRYYVLDEPSVPDAEYDRLFNELKALEAEHPHLVTPDSPTQRVGGEALSAFSQVRHEVPMLSLGNAFEETDLREFGRRVVEGLDQPGAVDYSCKPKLDGLAVSLLYRDGQLVQGATRGDGTTGEDISANVRTVRNIPLKLQGEGWPAVLEVRGEVYMSKAGFDRLNAAQAEAGGKTFANPRNAAAGSLRQLDSKITASRPLEFCCYGVGQVSESIGDSHIGVLEQLKAWGMPISRELRHAAGIEECLAYYRDIGERRNSLPYEIDGVVFKVNNLAAQRELGFRAREPRWAIAHKFPAMEELTEVLDVEFQVGRTGAVTPVARLKPVKVAGVTVSNATLHNMDEIARLGLRIGDTVIIRRAGDVIPQVMQVVLERRPDDARPVEVPSACPVCGSQVERTQLVKRSKGKETTSEGAVYRCVGRLACGAQLKQAIIHYVSRRAMDIDGLGEKSVEQLVDEGLIGSPADLYKLAFEQIVGLEGFAEVSSKKLLDAIEASKRPSLARFIYALGIPDVGEETAKVLARSLGSLARVQQALPQVLTYLPDIGLEVAYEIHNFFEDEHNQKVIEQLLASGMKLQDEGELAAEFAASTTLAGMIAKLDIASVGPTGAEKLVAKLDSLEKIIAADGIDLRQALAAKQADAVREFFKDEANQKLARDIEAQLLAFGMHWSCEKKVAEGLPLAGQTWVLTGTLERMSRDIAKDKLESLGAKVAGSVSGKTHCVVAGPGAGSKLAKASELGVKVLDEDAFVTFLAEQGIVV.

NAD(+) is bound by residues 31–35 (DAEYD) and 80–81 (SL). Catalysis depends on Lys114, which acts as the N6-AMP-lysine intermediate. NAD(+) is bound by residues Arg135, Glu172, Lys288, and Lys312. Residues Cys406, Cys409, Cys436, and Cys442 each coordinate Zn(2+). Residues 693-776 (AEGLPLAGQT…TFLAEQGIVV (84 aa)) form the BRCT domain.

The protein belongs to the NAD-dependent DNA ligase family. LigA subfamily. Requires Mg(2+) as cofactor. Mn(2+) serves as cofactor.

The catalysed reaction is NAD(+) + (deoxyribonucleotide)n-3'-hydroxyl + 5'-phospho-(deoxyribonucleotide)m = (deoxyribonucleotide)n+m + AMP + beta-nicotinamide D-nucleotide.. Functionally, DNA ligase that catalyzes the formation of phosphodiester linkages between 5'-phosphoryl and 3'-hydroxyl groups in double-stranded DNA using NAD as a coenzyme and as the energy source for the reaction. It is essential for DNA replication and repair of damaged DNA. This is DNA ligase from Pseudomonas putida (strain GB-1).